The primary structure comprises 1877 residues: Phosphatidylinositol 4-kinase stt4 (1877 aa).

The PIK helical domain maps to 1305–1491 (PDSDAASSPI…KPILDRVMDK (187 aa)). The interval 1492–1625 (MINSLSGEDK…EVWQSAIFKV (134 aa)) is pleckstrin homology (PH) domain conferring phosphoinositide binding specificity. A PI3K/PI4K catalytic domain is found at 1593 to 1861 (DPEELAVNGT…LIEQSYANKR (269 aa)). Positions 1599-1605 (VNGTEEE) are G-loop. The interval 1728 to 1736 (QFKDRHNGN) is catalytic loop. The activation loop stretch occupies residues 1747–1771 (HIDFGFIFDIAPGGITFESAPFKLT).

This sequence belongs to the PI3/PI4-kinase family. Type III PI4K subfamily.

Its subcellular location is the cytoplasm. The catalysed reaction is a 1,2-diacyl-sn-glycero-3-phospho-(1D-myo-inositol) + ATP = a 1,2-diacyl-sn-glycero-3-phospho-(1D-myo-inositol 4-phosphate) + ADP + H(+). Functionally, acts on phosphatidylinositol (PI) in the first committed step in the production of the second messenger inositol 1,4,5,-trisphosphate. The protein is Phosphatidylinositol 4-kinase stt4 (stt4) of Schizosaccharomyces pombe (strain 972 / ATCC 24843) (Fission yeast).